A 160-amino-acid polypeptide reads, in one-letter code: NADH-quinone oxidoreductase subunit B (160 aa).

[4Fe-4S] cluster-binding residues include Cys-37, Cys-38, Cys-102, and Cys-132.

Belongs to the complex I 20 kDa subunit family. In terms of assembly, NDH-1 is composed of 14 different subunits. Subunits NuoB, C, D, E, F, and G constitute the peripheral sector of the complex. It depends on [4Fe-4S] cluster as a cofactor.

The protein localises to the cell inner membrane. It carries out the reaction a quinone + NADH + 5 H(+)(in) = a quinol + NAD(+) + 4 H(+)(out). NDH-1 shuttles electrons from NADH, via FMN and iron-sulfur (Fe-S) centers, to quinones in the respiratory chain. Couples the redox reaction to proton translocation (for every two electrons transferred, four hydrogen ions are translocated across the cytoplasmic membrane), and thus conserves the redox energy in a proton gradient. In Cupriavidus metallidurans (strain ATCC 43123 / DSM 2839 / NBRC 102507 / CH34) (Ralstonia metallidurans), this protein is NADH-quinone oxidoreductase subunit B.